Reading from the N-terminus, the 68-residue chain is Wasabi receptor toxin (68 aa).

The first 21 residues, 1–21, serve as a signal peptide directing secretion; that stretch reads MKYFTLALTLLFLLLINPCKD. Residues 22-35 constitute a propeptide that is removed on maturation; that stretch reads MNFAWAESSEKVER. Cystine bridges form between C44–C62 and C48–C58.

Belongs to the short scorpion toxin superfamily. Potassium channel inhibitor kappa-KTx family. Kappa-KTx 1 subfamily. Monomer. In terms of tissue distribution, expressed by the venom gland.

The protein localises to the secreted. It is found in the host cytoplasm. Its function is as follows. Cell-penetrating peptide (CPP) with defensive purpose that induces pain by specifically activating mammalian sensory neuron TRPA1 channels. It non-covalently binds to the same region than other TRPA1 agonists (irritants), but acts via a distinct biochemical mechanism. Its binding stabilizes the TRPA1 open state and diminishes calcium-permeability. Consequently, it produces pain and pain hypersensitivity, but fails to trigger efferent release of neuropeptides (CGRP) and neurogenic inflammation typically produced by noxious electrophiles. Is not active on voltage-gated potassium channels and other TRP channels. The chain is Wasabi receptor toxin from Urodacus manicatus (Black rock scorpion).